A 407-amino-acid chain; its full sequence is Shaggy-related protein kinase GSK1 (407 aa).

The span at 1 to 19 (MEAPPGPEPMELDAPPPPA) shows a compositional bias: pro residues. Residues 1 to 21 (MEAPPGPEPMELDAPPPPAAV) form a disordered region. Positions 68–352 (YMAERVVGTG…ALDACAHSFF (285 aa)) constitute a Protein kinase domain. ATP is bound by residues 74-82 (VGTGSFGIV) and lysine 97. Aspartate 193 functions as the Proton acceptor in the catalytic mechanism.

Belongs to the protein kinase superfamily. CMGC Ser/Thr protein kinase family. GSK-3 subfamily. Interacts with LIC. Highly expressed in the entire young panicles, spikelets, awns, vascular bundles of palea and lemma, stigma and rachilla. Expressed in root tips, root hairs, lamina joint in the collar region, vascular bundles of coleoptiles.

The catalysed reaction is L-seryl-[protein] + ATP = O-phospho-L-seryl-[protein] + ADP + H(+). It catalyses the reaction L-threonyl-[protein] + ATP = O-phospho-L-threonyl-[protein] + ADP + H(+). In terms of biological role, probable serine-threonine kinase that may act as a negative regulator of brassinosteroid (BR) signaling during flower development. May have physiological roles in stress signal-transduction pathways. Phosphorylates LIC in response to BR perception. In Oryza sativa subsp. japonica (Rice), this protein is Shaggy-related protein kinase GSK1.